We begin with the raw amino-acid sequence, 361 residues long: 3-dehydroquinate synthase (361 aa).

NAD(+)-binding positions include 106 to 110 (GVVGD), 130 to 131 (TT), lysine 143, and lysine 152. Zn(2+) contacts are provided by glutamate 185, histidine 248, and histidine 265.

It belongs to the sugar phosphate cyclases superfamily. Dehydroquinate synthase family. The cofactor is NAD(+). Requires Co(2+) as cofactor. Zn(2+) serves as cofactor.

It localises to the cytoplasm. The enzyme catalyses 7-phospho-2-dehydro-3-deoxy-D-arabino-heptonate = 3-dehydroquinate + phosphate. The protein operates within metabolic intermediate biosynthesis; chorismate biosynthesis; chorismate from D-erythrose 4-phosphate and phosphoenolpyruvate: step 2/7. Its function is as follows. Catalyzes the conversion of 3-deoxy-D-arabino-heptulosonate 7-phosphate (DAHP) to dehydroquinate (DHQ). This Leptospira interrogans serogroup Icterohaemorrhagiae serovar copenhageni (strain Fiocruz L1-130) protein is 3-dehydroquinate synthase.